The primary structure comprises 210 residues: Protein RCR2 (210 aa).

A helical transmembrane segment spans residues 41 to 61 (WIFFIFFIVALLILLFSTAKV). The interval 125–149 (PNGKTEYLAPPPLSEEQASSTDKDL) is disordered. Position 161 is a phosphoserine (S161). Over residues 175–199 (NNFVNGQSNRNEQHSPTVESSSFDV) the composition is skewed to polar residues. Residues 175-210 (NNFVNGQSNRNEQHSPTVESSSFDVNNAPARAKVSK) form a disordered region. Position 191 is a phosphothreonine (T191).

The protein to yeast YBR005W.

The protein localises to the membrane. This is Protein RCR2 (RCR2) from Saccharomyces cerevisiae (strain ATCC 204508 / S288c) (Baker's yeast).